The following is a 227-amino-acid chain: MFLNEKVGAVIVAAGQSRRMEGQDKIFALLAGKPVLAHTLSVFQESPQVDDIALVMAEHNIEKAKELVKEYNFSKVIAICSGGTLRQDSVRSGLSALCDCGWILIHDGARPLLEPDSIPEGLEAAKLCGSAIAAVPLKDTIKEISPEGLVEKTLPRERLISVQTPQVFRADIIQKAYQRVGIIATDDAQLVEKLKLPVRIFSGACANIKITTPEDLLMAEILLKKGR.

It belongs to the IspD/TarI cytidylyltransferase family. IspD subfamily.

It carries out the reaction 2-C-methyl-D-erythritol 4-phosphate + CTP + H(+) = 4-CDP-2-C-methyl-D-erythritol + diphosphate. Its pathway is isoprenoid biosynthesis; isopentenyl diphosphate biosynthesis via DXP pathway; isopentenyl diphosphate from 1-deoxy-D-xylulose 5-phosphate: step 2/6. Catalyzes the formation of 4-diphosphocytidyl-2-C-methyl-D-erythritol from CTP and 2-C-methyl-D-erythritol 4-phosphate (MEP). The protein is 2-C-methyl-D-erythritol 4-phosphate cytidylyltransferase of Dehalococcoides mccartyi (strain CBDB1).